Consider the following 260-residue polypeptide: Aspartate/glutamate leucyltransferase (260 aa).

The protein belongs to the R-transferase family. Bpt subfamily.

It is found in the cytoplasm. The catalysed reaction is N-terminal L-glutamyl-[protein] + L-leucyl-tRNA(Leu) = N-terminal L-leucyl-L-glutamyl-[protein] + tRNA(Leu) + H(+). It catalyses the reaction N-terminal L-aspartyl-[protein] + L-leucyl-tRNA(Leu) = N-terminal L-leucyl-L-aspartyl-[protein] + tRNA(Leu) + H(+). Functionally, functions in the N-end rule pathway of protein degradation where it conjugates Leu from its aminoacyl-tRNA to the N-termini of proteins containing an N-terminal aspartate or glutamate. The polypeptide is Aspartate/glutamate leucyltransferase (Sphingomonas elodea).